The sequence spans 470 residues: MRMKGLYVVPLLLALVESAQKSDLGGDASAALINHSPMLIHRLQDLLQNSNSSDTTLRIRTANSNEVKVIHTHQLLLTLQSDIFEGLLLNQSEVTLQEPAECAAVFEKFIRYFYCGEISVNLNQAIPLHRLASKYHVTALQRGITEYMKTHFASESSQGHVVSWYHYALRMGDITLQESCLKFLAWNLSTVMSSNEWVTVSDNLMVSLLQRSDLVLQSELELFNAVEEWVSKKNPDVPVIEKVLRAIRYPMITPSQLFQIQKKSVVLASYHNSVQDLMFQAFQFHSASPLHFAKYFEVNCSMFVPRNYLSPSWGSQWIINNPARDDRSLTFQTQLGPSNHDTSKKITWNALFSPRWIPVSLRPVYSESVSSSSQSNRLEEGKPRLVMTSAMSGMDFAGVTFQKTVLVGVKRQQGKVFIKHVYNVHQSTDEVFDFLLNADLQKRTSEYLIDNSLHLHIIIKPIYHSLIKAK.

Positions 1–18 are cleaved as a signal peptide; it reads MRMKGLYVVPLLLALVES. Residues 53–122 form the BTB domain; the sequence is SDTTLRIRTA…FYCGEISVNL (70 aa). The BACK domain occupies 161 to 261; the sequence is VVSWYHYALR…ITPSQLFQIQ (101 aa).

It is found in the secreted. The polypeptide is BTB/POZ domain-containing protein 17 (btbd17) (Xenopus laevis (African clawed frog)).